Consider the following 393-residue polypeptide: NAD(P)H-quinone oxidoreductase subunit H, chloroplastic (393 aa).

This sequence belongs to the complex I 49 kDa subunit family. In terms of assembly, NDH is composed of at least 16 different subunits, 5 of which are encoded in the nucleus.

The protein localises to the plastid. It localises to the chloroplast thylakoid membrane. The catalysed reaction is a plastoquinone + NADH + (n+1) H(+)(in) = a plastoquinol + NAD(+) + n H(+)(out). The enzyme catalyses a plastoquinone + NADPH + (n+1) H(+)(in) = a plastoquinol + NADP(+) + n H(+)(out). Its function is as follows. NDH shuttles electrons from NAD(P)H:plastoquinone, via FMN and iron-sulfur (Fe-S) centers, to quinones in the photosynthetic chain and possibly in a chloroplast respiratory chain. The immediate electron acceptor for the enzyme in this species is believed to be plastoquinone. Couples the redox reaction to proton translocation, and thus conserves the redox energy in a proton gradient. The protein is NAD(P)H-quinone oxidoreductase subunit H, chloroplastic of Nasturtium officinale (Watercress).